The sequence spans 355 residues: Probable nitronate monooxygenase (355 aa).

FMN contacts are provided by residues N71, Q175, G180, G218, and 237–240 (QMGT).

This sequence belongs to the nitronate monooxygenase family. NMO class I subfamily. It depends on FMN as a cofactor.

The catalysed reaction is 3 propionate 3-nitronate + 3 O2 + H2O = 3 3-oxopropanoate + 2 nitrate + nitrite + H2O2 + 3 H(+). In terms of biological role, nitronate monooxygenase that uses molecular oxygen to catalyze the oxidative denitrification of alkyl nitronates. Acts on propionate 3-nitronate (P3N), the presumed physiological substrate. Probably functions in the detoxification of P3N, a metabolic poison produced by plants and fungi as a defense mechanism. This Staphylococcus aureus (strain JH1) protein is Probable nitronate monooxygenase.